A 550-amino-acid chain; its full sequence is Arginine--tRNA ligase (550 aa).

The 'HIGH' region motif lies at 130–140 (ANPTGPIHIGG).

Belongs to the class-I aminoacyl-tRNA synthetase family. Monomer.

The protein resides in the cytoplasm. It carries out the reaction tRNA(Arg) + L-arginine + ATP = L-arginyl-tRNA(Arg) + AMP + diphosphate. The polypeptide is Arginine--tRNA ligase (Mycobacterium ulcerans (strain Agy99)).